Here is a 211-residue protein sequence, read N- to C-terminus: IWLWLGTAGMFLGMLYFIARGWGETDSRRQKFYIATILITAIAFVNYLAMALGFGLTIVEFAGEEHPIYWARYSDWLFTTPLLLYDLGLLAGADRNTITSLVSLDVLMIGTGLVATLSAGSGVLSAGAERLVWWGISTAFLLVLLYFLFSSLSGRVADLPSDTRSTFKTLRNLVTVVWLVYPVWWLIGTEGIGLVGIGIETAGFMVIDLTA.

The chain crosses the membrane as a helical span at residues 1–19 (IWLWLGTAGMFLGMLYFIA). Over 20–33 (RGWGETDSRRQKFY) the chain is Cytoplasmic. A helical membrane pass occupies residues 34 to 52 (IATILITAIAFVNYLAMAL). Over 53 to 68 (GFGLTIVEFAGEEHPI) the chain is Extracellular. Residues 69–86 (YWARYSDWLFTTPLLLYD) traverse the membrane as a helical segment. At 87–97 (LGLLAGADRNT) the chain is on the cytoplasmic side. The helical transmembrane segment at 98–117 (ITSLVSLDVLMIGTGLVATL) threads the bilayer. The Extracellular portion of the chain corresponds to 118-130 (SAGSGVLSAGAER). Residues 131–150 (LVWWGISTAFLLVLLYFLFS) form a helical membrane-spanning segment. Residues 151–168 (SLSGRVADLPSDTRSTFK) lie on the Cytoplasmic side of the membrane. A helical transmembrane segment spans residues 169–187 (TLRNLVTVVWLVYPVWWLI). At 188–199 (GTEGIGLVGIGI) the chain is on the extracellular side. A helical transmembrane segment spans residues 200–211 (ETAGFMVIDLTA).

The protein belongs to the archaeal/bacterial/fungal opsin family.

The protein resides in the cell membrane. In terms of biological role, light-driven proton pump. This is Bacteriorhodopsin (bop) from Halobacterium halobium (strain port).